The primary structure comprises 448 residues: B-cell lymphoma 3 protein homolog (448 aa).

The tract at residues 1 to 54 (MPRCPAGAMDEGPVDLRTRPKGTPGAALPLRKRPLRPASPEPATTRSPAGPLDA) is disordered. Ser-39 carries the phosphoserine modification. ANK repeat units lie at residues 129 to 161 (DGDT…REVD), 166 to 195 (LRQT…SPMA), 199 to 228 (HGQT…SGSV), 236 to 265 (EGLT…DIDA), 270 to 299 (SGRS…NVNA), 303 to 332 (SGSS…DSGL), and 333 to 362 (KNCH…RAAS). Residues 356–448 (KASRAASGSQ…VPPSPAPGSS (93 aa)) are disordered. The span at 361-376 (ASGSQPEPSPDQSATN) shows a compositional bias: polar residues. Ser-369 carries the phosphoserine modification. Over residues 377-398 (SPESSSRLSSNGLQSSPSSSPS) the composition is skewed to low complexity. Phosphoserine; by GSK3 is present on residues Ser-396 and Ser-400. Over residues 411-423 (TPQNFFLPTTSTP) the composition is skewed to polar residues. Low complexity predominate over residues 425–436 (FLPFPGVLRGPG). Pro residues predominate over residues 437-448 (RPVPPSPAPGSS).

Component of a complex consisting of the NF-kappa-B p52-p52 homodimer and BCL3. Component of a complex consisting of the NF-kappa-B p50-p50 homodimer and BCL3. Interacts with N4BP2, COPS5 and PIR. Interacts with CYLD. Polyubiquitinated. Ubiquitination via 'Lys-63'-linked ubiquitin chains is required for nuclear accumulation. Deubiquitinated by CYLD, which acts on 'Lys-63'-linked ubiquitin chains. Deubiquitination by CYLD prevents nuclear accumulation. Post-translationally, activated by phosphorylation.

It is found in the nucleus. It localises to the cytoplasm. The protein localises to the perinuclear region. In terms of biological role, contributes to the regulation of transcriptional activation of NF-kappa-B target genes. In the cytoplasm, inhibits the nuclear translocation of the NF-kappa-B p50 subunit. In the nucleus, acts as a transcriptional activator that promotes transcription of NF-kappa-B target genes. Contributes to the regulation of cell proliferation. The chain is B-cell lymphoma 3 protein homolog (Bcl3) from Mus musculus (Mouse).